Here is a 323-residue protein sequence, read N- to C-terminus: NADH-cytochrome b5 reductase 2 (323 aa).

A helical transmembrane segment spans residues L32–L48. The FAD-binding FR-type domain maps to Q72 to E177. K180–L215 is an FAD binding site.

Belongs to the flavoprotein pyridine nucleotide cytochrome reductase family. FAD is required as a cofactor.

The protein resides in the mitochondrion outer membrane. It carries out the reaction 2 Fe(III)-[cytochrome b5] + NADH = 2 Fe(II)-[cytochrome b5] + NAD(+) + H(+). Functionally, may mediate the reduction of outer membrane cytochrome b5. This chain is NADH-cytochrome b5 reductase 2 (mcr1), found in Aspergillus fumigatus (strain ATCC MYA-4609 / CBS 101355 / FGSC A1100 / Af293) (Neosartorya fumigata).